The chain runs to 767 residues: Dipeptidyl peptidase 4 (767 aa).

At 1–6 (MKTPWK) the chain is on the cytoplasmic side. A helical; Signal-anchor for type II membrane protein transmembrane segment spans residues 7-28 (VLLGLLGVAALVTIITVPVVLL). The Extracellular segment spans residues 29–767 (NKDEAAADSR…HFLQQCFSLR (739 aa)). 6 N-linked (GlcNAc...) asparagine glycosylation sites follow: N83, N90, N148, N217, N227, and N319. 4 disulfide bridges follow: C326-C337, C383-C395, C445-C448, and C455-C473. An N-linked (GlcNAc...) asparagine glycan is attached at N521. The Charge relay system role is filled by S631. Cysteines 650 and 763 form a disulfide. N686 is a glycosylation site (N-linked (GlcNAc...) asparagine). Active-site charge relay system residues include D709 and H741.

Belongs to the peptidase S9B family. DPPIV subfamily. Monomer. Homodimer. Heterodimer with Seprase (FAP). Requires homodimerization for optimal dipeptidyl peptidase activity and T-cell costimulation. Found in a membrane raft complex, at least composed of BCL10, CARD11, DPP4 and IKBKB. Associates with collagen. Interacts with PTPRC; the interaction is enhanced in an interleukin-12-dependent manner in activated lymphocytes. Interacts (via extracellular domain) with ADA; does not inhibit its dipeptidyl peptidase activity. Interacts with CAV1 (via the N-terminus); the interaction is direct. Interacts (via cytoplasmic tail) with CARD11 (via PDZ domain); its homodimerization is necessary for interaction with CARD11. Interacts with IGF2R; the interaction is direct. Interacts with GPC3. Post-translationally, the soluble form (Dipeptidyl peptidase 4 soluble form also named SDPP) derives from the membrane form (Dipeptidyl peptidase 4 membrane form also named MDPP) by proteolytic processing. In terms of processing, N- and O-Glycosylated. Phosphorylated. Mannose 6-phosphate residues in the carbohydrate moiety are necessary for interaction with IGF2R in activated T-cells. Mannose 6-phosphorylation is induced during T-cell activation. Expressed in bile ducts and other epithelial brush borders (small intestine, kidney, colon, pancreatic duct); acinar structures in salivary glands; endothelial structures and T cell areas in thymus, spleen and lymph node.

The protein localises to the secreted. It is found in the cell membrane. The protein resides in the apical cell membrane. Its subcellular location is the cell projection. It localises to the invadopodium membrane. The protein localises to the lamellipodium membrane. It is found in the cell junction. The protein resides in the membrane raft. It carries out the reaction Release of an N-terminal dipeptide, Xaa-Yaa-|-Zaa-, from a polypeptide, preferentially when Yaa is Pro, provided Zaa is neither Pro nor hydroxyproline.. Its activity is regulated as follows. Inhibited by GPC3 and diprotin A. In terms of biological role, cell surface glycoprotein receptor involved in the costimulatory signal essential for T-cell receptor (TCR)-mediated T-cell activation. Acts as a positive regulator of T-cell coactivation, by binding at least ADA, CAV1, IGF2R, and PTPRC. Its binding to CAV1 and CARD11 induces T-cell proliferation and NF-kappa-B activation in a T-cell receptor/CD3-dependent manner. Its interaction with ADA also regulates lymphocyte-epithelial cell adhesion. In association with FAP is involved in the pericellular proteolysis of the extracellular matrix (ECM), the migration and invasion of endothelial cells into the ECM. May be involved in the promotion of lymphatic endothelial cells adhesion, migration and tube formation. When overexpressed, enhanced cell proliferation, a process inhibited by GPC3. Also acts as a serine exopeptidase with a dipeptidyl peptidase activity that regulates various physiological processes by cleaving peptides in the circulation, including many chemokines, mitogenic growth factors, neuropeptides and peptide hormones. Removes N-terminal dipeptides sequentially from polypeptides having unsubstituted N-termini provided that the penultimate residue is proline. This is Dipeptidyl peptidase 4 (Dpp4) from Rattus norvegicus (Rat).